Here is a 776-residue protein sequence, read N- to C-terminus: MGRGSGTFERLLDKATSQLLLETDWESILQICDLIRQGDTQAKYAVNSIKKKVNDKNPHVALYALEVMESVVKNCGQTVHDEVANKQTMEELKELLKRQVEVNVRNKILYLIQAWAHAFRNEPKYKVVQDTYQIMKVEGHVFPEFKESDAMFAAERAPDWVDAEECHRCRVQFGVVTRKHHCRACGQIFCGKCSSKYSTIPKFGIEKEVRVCEPCYEQLNKKAEGKAASTTELPPEYLTSPLSQQSQLPPKRDETALQEEEELQLALALSQSEAEEKERMRQKSTYTAHPKSEPAPLASSAPPAGSLYSSPVNSSAPLAEDIDPELARYLNRNYWEKKQEEARKSPTPSAPVPLTEPAAQPGEGHTAPNSMVEAPLPETDSQPITSCSGPFSEQYQNGESEESHEQFLKALQNAVSTFVNRMKSNHMRGRSITNDSAVLSLFQSINSTHPQLLELLNRLDERRLYYEGLQDKLAQIRDARGALSALREEHREKLRRAAEEAERQRQIQLAQKLEIMRQKKQEYLEVQRQLAIQRLQEQEKERQMRLEQQKQTVQMRAQMPAFPLPYAQLQAMPTAGGVLYQPSGPTSFPGTFSPAGSVEGSPMHGVYMSQPAPATGPYPSMPGTTADPSMVSAYMYPAGAPGAQAAPQAQAGPTTNPAYSSYQPTPTPGYQNVASQAPQSLPAISQPPQTSNIGYMGSQPMSMGYQPYNMQNLMTTLPGQDASLPAQQPYITGQQPMYQQMAPSTGPPQQQPPVAQPPPTQGPPAQGNETQLISFD.

Residues 15–143 form the VHS domain; that stretch reads ATSQLLLETD…IMKVEGHVFP (129 aa). The FYVE-type zinc-finger motif lies at 160 to 220; the sequence is WVDAEECHRC…VCEPCYEQLN (61 aa). Residues Cys166, Cys169, Cys182, Cys185, Cys190, and Cys193 each coordinate Zn(2+). The residue at position 207 (Lys207) is an N6-acetyllysine. Residues Cys212 and Cys215 each contribute to the Zn(2+) site. Tyr216 carries the post-translational modification Phosphotyrosine. A disordered region spans residues 223–319; that stretch reads AEGKAASTTE…SPVNSSAPLA (97 aa). An interaction with SNX1 region spans residues 225-542; sequence GKAASTTELP…QRLQEQEKER (318 aa). Positions 258 to 277 constitute a UIM domain; the sequence is QEEEELQLALALSQSEAEEK. Over residues 294–311 the composition is skewed to low complexity; sequence PAPLASSAPPAGSLYSSP. Residues Tyr308, Tyr329, and Tyr334 each carry the phosphotyrosine modification. A disordered region spans residues 338–401; that stretch reads KQEEARKSPT…SEQYQNGESE (64 aa). Polar residues predominate over residues 379 to 398; it reads TDSQPITSCSGPFSEQYQNG. The segment at 444 to 542 is interaction with SNAP25 and TRAK2; sequence SINSTHPQLL…QRLQEQEKER (99 aa). The tract at residues 453–571 is interaction with STAM; it reads LELLNRLDER…FPLPYAQLQA (119 aa). Residues 479 to 776 are interaction with NF2; that stretch reads ARGALSALRE…GNETQLISFD (298 aa). At Lys550 the chain carries N6-succinyllysine. Positions 719–776 are disordered; that stretch reads GQDASLPAQQPYITGQQPMYQQMAPSTGPPQQQPPVAQPPPTQGPPAQGNETQLISFD. Residues 725-743 show a composition bias toward polar residues; the sequence is PAQQPYITGQQPMYQQMAP. Over residues 745-762 the composition is skewed to pro residues; it reads TGPPQQQPPVAQPPPTQG. Positions 767–776 are enriched in polar residues; that stretch reads GNETQLISFD.

In terms of assembly, component of the ESCRT-0 complex composed of STAM or STAM2 and HGS. Part of a complex at least composed of HSG, STAM2 (or probably STAM) and EPS15. Interacts with STAM. Interacts with STAM2. Interacts with EPS15; the interaction is direct, calcium-dependent and inhibited by SNAP25. Identified in a complex with STAM and LITAF. Found in a complex with STAM and E3 ligase ITCH and DTX3L. Interacts with E3 ligase DTX3L; the interaction brings together STAM and HSG, promotes their recruitment to early endosomes and decreases STAM and HGS ubiquitination by ITCH. Interacts with NF2; the interaction is direct. Interacts with ubiquitin; the interaction is direct. Interacts with VPS37C. Interacts with SMAD1, SMAD2 and SMAD3. Interacts with TSG101; the interaction mediates the association with the ESCRT-I complex. Interacts with SNAP25; the interaction is direct and decreases with addition of increasing concentrations of free calcium. Interacts with SNX1; the interaction is direct. Component of a 550 kDa membrane complex at least composed of HGS and SNX1 but excluding EGFR. Interacts with TRAK2. Interacts with TRAK1. Component of the CART complex, at least composed of ACTN4, HGS/HRS, MYO5B and TRIM3. Interacts (via UIM domain) with UBQLN1 (via ubiquitin-like domain). Interacts with ARRDC3. Identified in a complex containing at least ARRDC4, AVPR2 and HGS. Interacts with LAPTM4B; promotes HGS ubiquitination. In terms of processing, phosphorylated on Tyr-334. This phosphorylation occurs in response to EGF. A minor site of phosphorylation on Tyr-329 is detected. Protein phosphorylation may also be triggered in response to IL-2, GM-CSF and HGF. Ubiquitinated by ITCH. Ubiquitously expressed.

The protein resides in the cytoplasm. It localises to the early endosome membrane. It is found in the endosome. Its subcellular location is the multivesicular body membrane. Its function is as follows. Involved in intracellular signal transduction mediated by cytokines and growth factors. When associated with STAM, it suppresses DNA signaling upon stimulation by IL-2 and GM-CSF. Could be a direct effector of PI3-kinase in vesicular pathway via early endosomes and may regulate trafficking to early and late endosomes by recruiting clathrin. May concentrate ubiquitinated receptors within clathrin-coated regions. Involved in down-regulation of receptor tyrosine kinase via multivesicular body (MVBs) when complexed with STAM (ESCRT-0 complex). The ESCRT-0 complex binds ubiquitin and acts as a sorting machinery that recognizes ubiquitinated receptors and transfers them to further sequential lysosomal sorting/trafficking processes. Involved in receptor recycling via its association with the CART complex, a multiprotein complex required for efficient transferrin receptor recycling but not for EGFR degradation. May contribute to the efficient recruitment of SMADs to the activin receptor complex. This chain is Hepatocyte growth factor-regulated tyrosine kinase substrate (Hgs), found in Rattus norvegicus (Rat).